A 471-amino-acid chain; its full sequence is 3-isopropylmalate dehydratase large subunit (471 aa).

Positions 349, 409, and 412 each coordinate [4Fe-4S] cluster.

Belongs to the aconitase/IPM isomerase family. LeuC type 1 subfamily. Heterodimer of LeuC and LeuD. It depends on [4Fe-4S] cluster as a cofactor.

It carries out the reaction (2R,3S)-3-isopropylmalate = (2S)-2-isopropylmalate. The protein operates within amino-acid biosynthesis; L-leucine biosynthesis; L-leucine from 3-methyl-2-oxobutanoate: step 2/4. Its function is as follows. Catalyzes the isomerization between 2-isopropylmalate and 3-isopropylmalate, via the formation of 2-isopropylmaleate. The sequence is that of 3-isopropylmalate dehydratase large subunit from Aliivibrio salmonicida (strain LFI1238) (Vibrio salmonicida (strain LFI1238)).